Reading from the N-terminus, the 204-residue chain is uncharacterized protein (204 aa).

The active-site Acyl-thioester intermediate is the Cys-52. Active-site residues include His-89 and Asp-104.

It belongs to the arylamine N-acetyltransferase family.

This is an uncharacterized protein from Acanthamoeba polyphaga mimivirus (APMV).